We begin with the raw amino-acid sequence, 171 residues long: Small ribosomal subunit protein uS5 (171 aa).

One can recognise an S5 DRBM domain in the interval 15 to 78; that stretch reads LEEKVVKINR…EKAKKQLVRI (64 aa).

This sequence belongs to the universal ribosomal protein uS5 family. In terms of assembly, part of the 30S ribosomal subunit. Contacts proteins S4 and S8.

In terms of biological role, with S4 and S12 plays an important role in translational accuracy. Its function is as follows. Located at the back of the 30S subunit body where it stabilizes the conformation of the head with respect to the body. The polypeptide is Small ribosomal subunit protein uS5 (Onion yellows phytoplasma (strain OY-M)).